The following is a 310-amino-acid chain: Olfactory receptor 8G3 (310 aa).

The Extracellular portion of the chain corresponds to 1–25 (MDPGNHSSVTESILAGLSEQPELQL). Residue asparagine 5 is glycosylated (N-linked (GlcNAc...) asparagine). The chain crosses the membrane as a helical span at residues 26–46 (RLFLLFLGICVVTVVGNLGMI). Topologically, residues 47–54 (TLIGLSSH) are cytoplasmic. A helical membrane pass occupies residues 55 to 75 (LHTPMYYFLSSLSFIDFCHST). Residues 76–99 (VITPKMLVNFATEKNIISYPECMA) are Extracellular-facing. The cysteines at positions 97 and 189 are disulfide-linked. The helical transmembrane segment at 100–120 (QLYLFSIFAIAECHMLAAMAY) threads the bilayer. Residues 121–139 (DCYVAICSPLLYNVIMSYH) are Cytoplasmic-facing. Residues 140–160 (HCFWLTVGVYILGILGSTIHT) traverse the membrane as a helical segment. Residues 161–197 (SFMLRLFLCKTNVINHYFCDLFPLLGLSCSSTYINEL) lie on the Extracellular side of the membrane. The chain crosses the membrane as a helical span at residues 198-217 (LVLVLSAFNILMPALTILAS). At 218 to 237 (YIFIIASILRIHSTEGRSKA) the chain is on the cytoplasmic side. The chain crosses the membrane as a helical span at residues 238–258 (FSTCSSHILAVAVFFGSAAFM). Topologically, residues 259–271 (YLQPSSVSSMDQR) are extracellular. The helical transmembrane segment at 272-292 (KVSSVFYTTIVPMLNPLIYSL) threads the bilayer. Residues 293–310 (RNKDVKLAVKKILHQTAC) lie on the Cytoplasmic side of the membrane.

Belongs to the G-protein coupled receptor 1 family.

Its subcellular location is the cell membrane. Its function is as follows. Odorant receptor. The polypeptide is Olfactory receptor 8G3 (Homo sapiens (Human)).